A 141-amino-acid chain; its full sequence is Bombinins BLP-7/H-BO (141 aa).

Residues 1 to 18 form the signal peptide; the sequence is MNFKYIIAVSFLIASTYA. Residues 19–43 constitute a propeptide that is removed on maturation; sequence RSVKNDEQSLSQRDVLDEESLREIR. The residue at position 70 (Asn70) is an Asparagine amide. Residues 74–123 constitute a propeptide that is removed on maturation; sequence TAEEHEVMKRLEAVMRDLDSLDHPEEASEKETRGFNQEEIANLFTKKEKR. A Leucine amide modification is found at Leu140.

It belongs to the bombinin family. As to expression, expressed by the skin glands.

Its subcellular location is the secreted. Functionally, antimicrobial peptide with activity against Gram-positive and -negative bacteria and fungi. Shows activity against P.acnes (MIC=5 uM), E.coli (MIC=5-6.3 uM), S.aureus (MIC=5-6.3 uM), M.luteus, S.cerevisiae and C.albicans (MIC=10-12.5 uM). Also reduces the production of interleukin (IL)-8 and granulocyte-macrophage colony stimulating factor (CSF2) in normal human epidermal keratinocytes (NHEKs). Shows anticancer activity against three human hepatoma cell lines. In vivo, using the rat ear edema model, suppress P.acnes-induced skin inflammation, significantly reducing the ear thickness. Shows weak hemolytic activity against human erythrocytes. Its function is as follows. Shows weak antimicrobial activity (tested on E.coli, S.aureus and C.albicans). Shows high hemolytic activity against human erythrocytes (38% erythrocyte lysis at 80.0 uM, and up to 85% at 159.7 uM). This is Bombinins BLP-7/H-BO from Bombina orientalis (Oriental fire-bellied toad).